The sequence spans 406 residues: Arginine biosynthesis bifunctional protein ArgJ (406 aa).

The substrate site is built by Thr-154, Lys-180, Thr-191, Glu-278, Asn-401, and Thr-406. The active-site Nucleophile is Thr-191.

The protein belongs to the ArgJ family. As to quaternary structure, heterotetramer of two alpha and two beta chains.

The protein localises to the cytoplasm. The catalysed reaction is N(2)-acetyl-L-ornithine + L-glutamate = N-acetyl-L-glutamate + L-ornithine. It catalyses the reaction L-glutamate + acetyl-CoA = N-acetyl-L-glutamate + CoA + H(+). Its pathway is amino-acid biosynthesis; L-arginine biosynthesis; L-ornithine and N-acetyl-L-glutamate from L-glutamate and N(2)-acetyl-L-ornithine (cyclic): step 1/1. It functions in the pathway amino-acid biosynthesis; L-arginine biosynthesis; N(2)-acetyl-L-ornithine from L-glutamate: step 1/4. Catalyzes two activities which are involved in the cyclic version of arginine biosynthesis: the synthesis of N-acetylglutamate from glutamate and acetyl-CoA as the acetyl donor, and of ornithine by transacetylation between N(2)-acetylornithine and glutamate. This is Arginine biosynthesis bifunctional protein ArgJ from Gloeobacter violaceus (strain ATCC 29082 / PCC 7421).